A 260-amino-acid chain; its full sequence is 14-3-3-like protein GF14-F (260 aa).

The interval 241 to 260 (NAEDGGDEIKEAAKPEGEGH) is disordered. Over residues 247–260 (DEIKEAAKPEGEGH) the composition is skewed to basic and acidic residues.

This sequence belongs to the 14-3-3 family. As to quaternary structure, may form a complex with the transcriptional activator VP1 and the bZIP transcription factor EMBP1. Expressed in seedlings, roots and panicles and at lower levels in flag leaves and internodes.

It localises to the cytoplasm. Its subcellular location is the nucleus. Is associated with a DNA binding complex that binds to the G box, a well-characterized cis-acting DNA regulatory element found in plant genes. The sequence is that of 14-3-3-like protein GF14-F (GF14F) from Oryza sativa subsp. japonica (Rice).